A 247-amino-acid polypeptide reads, in one-letter code: Membrane-embedded CAAX protease MroQ (247 aa).

The signal sequence occupies residues 1–17 (MTRLWASLLTVIIYILS). 3 helical membrane passes run 42-62 (VIYIQLVLFLIAATTIILINL), 81-101 (IIPWALLGFALVMIYQMVVSI), and 119-139 (LIIIARKIPIFIFFVSIIGPL). E141 is a catalytic residue. 2 helical membrane passes run 162–182 (IVAFIIATTVSSLIFALAHND) and 183–203 (FKFIPVYFGMGVIFSLAYVWT).

The protein belongs to the peptidase U48 family.

Its subcellular location is the membrane. Its function is as follows. Participates in the regulation of the Agr quorum sensing activity and plays thereby an important role in virulence. Mechanistically, elicits a protease dependent control of Agr activity without playing a role in the processing of the pheromone-precursor AgrD. This chain is Membrane-embedded CAAX protease MroQ (mroQ), found in Staphylococcus aureus (strain USA300).